The sequence spans 393 residues: S-adenosylmethionine synthase (393 aa).

E9 serves as a coordination point for Mg(2+). H15 contributes to the ATP binding site. E43 lines the K(+) pocket. The L-methionine site is built by E56 and Q99. Residues 167-169, 235-238, D246, 252-253, A269, K273, and K277 each bind ATP; these read DGK, SGRF, and RK. Residue D246 coordinates L-methionine. L-methionine is bound at residue K277.

Belongs to the AdoMet synthase family. As to quaternary structure, homotetramer. Mn(2+) is required as a cofactor. It depends on Mg(2+) as a cofactor. The cofactor is Co(2+). K(+) serves as cofactor.

Its subcellular location is the cytoplasm. It carries out the reaction L-methionine + ATP + H2O = S-adenosyl-L-methionine + phosphate + diphosphate. The protein operates within amino-acid biosynthesis; S-adenosyl-L-methionine biosynthesis; S-adenosyl-L-methionine from L-methionine: step 1/1. Functionally, catalyzes the formation of S-adenosylmethionine from methionine and ATP. The reaction comprises two steps that are both catalyzed by the same enzyme: formation of S-adenosylmethionine (AdoMet) and triphosphate, and subsequent hydrolysis of the triphosphate. In Solanum palustre (Non-tuber-performing potato), this protein is S-adenosylmethionine synthase (SAMS).